The sequence spans 255 residues: Small ribosomal subunit protein eS4 (255 aa).

An S4 RNA-binding domain is found at 44-107 (IPLLILVRDV…DEYYRMIPYP (64 aa)).

Belongs to the eukaryotic ribosomal protein eS4 family.

This chain is Small ribosomal subunit protein eS4, found in Ignicoccus hospitalis (strain KIN4/I / DSM 18386 / JCM 14125).